A 107-amino-acid polypeptide reads, in one-letter code: U20-lycotoxin-Ls1b (107 aa).

The N-terminal stretch at 1-30 is a signal peptide; sequence MFSTSDQVSKMNSRILSALLILGIATCVIA. Residues 31–76 form the WAP domain; it reads GGFCPKSRHPQCNLSYKINDCCAQSDCRVGSVCCVEGCGNVCRAES. 5 disulfides stabilise this stretch: cysteine 34–cysteine 64, cysteine 42–cysteine 68, cysteine 51–cysteine 63, cysteine 52–cysteine 90, and cysteine 57–cysteine 72.

Belongs to the venom protein 11 family. 02 (wap-2) subfamily. In terms of processing, contains 5 disulfide bonds. As to expression, expressed by the venom gland.

Its subcellular location is the secreted. Has antibacterial activity. The sequence is that of U20-lycotoxin-Ls1b from Lycosa singoriensis (Wolf spider).